Reading from the N-terminus, the 237-residue chain is Myelin protein zero-like protein 3 (237 aa).

The N-terminal stretch at 1-32 (MQLARGTVGGRGCALFPLLSILVVQGARIVLS) is a signal peptide. The Ig-like V-type domain maps to 33-149 (LEISADAHVR…NIPLTELTVT (117 aa)). Residues 33–159 (LEISADAHVR…ERGFGTMLSS (127 aa)) lie on the Extracellular side of the membrane. A disulfide bridge links C53 with C129. N124 carries N-linked (GlcNAc...) asparagine glycosylation. Residues 160 to 180 (VALLSILVFVPSAVVVILLLV) traverse the membrane as a helical segment. The Cytoplasmic segment spans residues 181 to 237 (RMGRKATGVQKRSRSGYKKSSIEVSDDTDQEDSNDCMTRLCVRCAECLDSDYEEEAY).

It belongs to the myelin P0 protein family. In terms of tissue distribution, present in all tissues tested, including the skin. Present in the keratinocytes and sebocytes in the skin (at protein level).

It localises to the membrane. In terms of biological role, mediates homophilic cell-cell adhesion. This is Myelin protein zero-like protein 3 (Mpzl3) from Mus musculus (Mouse).